A 310-amino-acid polypeptide reads, in one-letter code: Aspartate carbamoyltransferase catalytic subunit (310 aa).

Residues Arg-57 and Thr-58 each coordinate carbamoyl phosphate. Lys-86 serves as a coordination point for L-aspartate. Residues Arg-107, His-135, and Gln-138 each coordinate carbamoyl phosphate. L-aspartate-binding residues include Arg-168 and Arg-229. The carbamoyl phosphate site is built by Leu-268 and Pro-269.

This sequence belongs to the aspartate/ornithine carbamoyltransferase superfamily. ATCase family. In terms of assembly, heterooligomer of catalytic and regulatory chains.

It catalyses the reaction carbamoyl phosphate + L-aspartate = N-carbamoyl-L-aspartate + phosphate + H(+). It functions in the pathway pyrimidine metabolism; UMP biosynthesis via de novo pathway; (S)-dihydroorotate from bicarbonate: step 2/3. Functionally, catalyzes the condensation of carbamoyl phosphate and aspartate to form carbamoyl aspartate and inorganic phosphate, the committed step in the de novo pyrimidine nucleotide biosynthesis pathway. The chain is Aspartate carbamoyltransferase catalytic subunit from Thermococcus kodakarensis (strain ATCC BAA-918 / JCM 12380 / KOD1) (Pyrococcus kodakaraensis (strain KOD1)).